The chain runs to 408 residues: Acetate kinase (408 aa).

Residue asparagine 7 coordinates Mg(2+). Position 14 (lysine 14) interacts with ATP. Arginine 91 provides a ligand contact to substrate. Catalysis depends on aspartate 148, which acts as the Proton donor/acceptor. ATP contacts are provided by residues 208–212 (HLGNG), 283–285 (DFR), and 331–335 (GIGEN). Glutamate 384 serves as a coordination point for Mg(2+).

Belongs to the acetokinase family. As to quaternary structure, homodimer. It depends on Mg(2+) as a cofactor. The cofactor is Mn(2+).

It is found in the cytoplasm. It carries out the reaction acetate + ATP = acetyl phosphate + ADP. Its pathway is metabolic intermediate biosynthesis; acetyl-CoA biosynthesis; acetyl-CoA from acetate: step 1/2. In terms of biological role, catalyzes the formation of acetyl phosphate from acetate and ATP. Can also catalyze the reverse reaction. The chain is Acetate kinase from Methanosarcina mazei (Methanosarcina frisia).